Consider the following 374-residue polypeptide: MKFFFILFYPLSLLYQFLFWVSQFKIKPFVLPHVLVISVGNVTMGGTGKTPFVQYLVRYFKAKNKKYAITILSRGYKAKLSKVGAILRDGLSPHLYGDEPSEHKELFPDVQVIIGKNRKESFLKHNQIHSKFHIVILDDGFQHKQIHRDFDIVLLDANGPFGNGQTIPLGFLREPISHLRRAHTIVFTKLTDQNKDKSIRAINILKQKQIPVPSYTSHFLANLVQIDLNTLKSNPVQLPVDQIRQTKVLDEDANDGYFLFTGVGNPKHVLETAESIIGKKINQHRFFPDHYEFEESVLGSIIGEVKQGTVLLTTEKDWVKVRTKKGFLEELKKRNIQIFVIKIEVVVNEKESFESMLAGLVSTYEAKNDLVSMN.

43-50 contributes to the ATP binding site; it reads TMGGTGKT.

It belongs to the LpxK family.

It carries out the reaction a lipid A disaccharide + ATP = a lipid IVA + ADP + H(+). It functions in the pathway glycolipid biosynthesis; lipid IV(A) biosynthesis; lipid IV(A) from (3R)-3-hydroxytetradecanoyl-[acyl-carrier-protein] and UDP-N-acetyl-alpha-D-glucosamine: step 6/6. Transfers the gamma-phosphate of ATP to the 4'-position of a tetraacyldisaccharide 1-phosphate intermediate (termed DS-1-P) to form tetraacyldisaccharide 1,4'-bis-phosphate (lipid IVA). In Leptospira biflexa serovar Patoc (strain Patoc 1 / Ames), this protein is Tetraacyldisaccharide 4'-kinase.